The chain runs to 294 residues: Glycine--tRNA ligase alpha subunit (294 aa).

The protein belongs to the class-II aminoacyl-tRNA synthetase family. As to quaternary structure, tetramer of two alpha and two beta subunits.

The protein resides in the cytoplasm. It catalyses the reaction tRNA(Gly) + glycine + ATP = glycyl-tRNA(Gly) + AMP + diphosphate. The protein is Glycine--tRNA ligase alpha subunit of Trichodesmium erythraeum (strain IMS101).